Consider the following 302-residue polypeptide: Acetylglutamate kinase (302 aa).

Substrate is bound by residues 55-56 (GG), R77, and N176.

It belongs to the acetylglutamate kinase family. ArgB subfamily.

The protein resides in the cytoplasm. The enzyme catalyses N-acetyl-L-glutamate + ATP = N-acetyl-L-glutamyl 5-phosphate + ADP. It participates in amino-acid biosynthesis; L-arginine biosynthesis; N(2)-acetyl-L-ornithine from L-glutamate: step 2/4. Its function is as follows. Catalyzes the ATP-dependent phosphorylation of N-acetyl-L-glutamate. This chain is Acetylglutamate kinase, found in Corynebacterium efficiens (strain DSM 44549 / YS-314 / AJ 12310 / JCM 11189 / NBRC 100395).